Reading from the N-terminus, the 258-residue chain is (S)-hydroxynitrile lyase (258 aa).

Residues 5-242 (HFVLIHTICH…GGDHKLQLTK (238 aa)) enclose the AB hydrolase-1 domain. 2-hydroxy-2-methylpropanenitrile is bound by residues Thr11 and Ser80. Acetone contacts are provided by Thr11, Ser80, and Cys81. The Proton donor/acceptor role is filled by Ser80. His236 functions as the Proton donor/acceptor in the catalytic mechanism.

Belongs to the AB hydrolase superfamily. Hydroxynitrile lyase family. As to quaternary structure, homotetramer.

It carries out the reaction a monosubstituted aliphatic (S)-hydroxynitrile = an aldehyde + hydrogen cyanide. The enzyme catalyses a disubstituted aliphatic (S)-hydroxynitrile = a ketone + hydrogen cyanide. It catalyses the reaction an aromatic (S)-hydroxynitrile = an aromatic aldehyde + hydrogen cyanide. The catalysed reaction is 2-hydroxy-2-methylpropanenitrile = acetone + hydrogen cyanide. It carries out the reaction butan-2-one + hydrogen cyanide = 2-hydroxy-2-methylbutanenitrile. The enzyme catalyses pentan-2-one + hydrogen cyanide = (2S)-2-hydroxy-2-methylpentanenitrile. It catalyses the reaction hexan-2-one + hydrogen cyanide = (2S)-2-hydroxy-2-methylhexanenitrile. The catalysed reaction is heptan-2-one + hydrogen cyanide = (2S)-2-hydroxy-2-methylheptanenitrile. It carries out the reaction 4-methylpentan-2-one + hydrogen cyanide = (2S)-2-hydroxy-2,4-dimethylpentanenitrile. The enzyme catalyses 3,3-dimethylbutan-2-one + hydrogen cyanide = (2S)-2-hydroxy-2-methyl-3,3-dimethylbutanenitrile. It catalyses the reaction acetophenone + hydrogen cyanide = (2S)-2-hydroxy-2-phenylpropanenitrile. The catalysed reaction is propanal + hydrogen cyanide = (2S)-2-hydroxybutanenitrile. It carries out the reaction pentanal + hydrogen cyanide = (2S)-2-hydroxyhexanenitrile. The enzyme catalyses 2-methylpropanal + hydrogen cyanide = (2S)-2-hydroxy-3-methylbutanenitrile. It catalyses the reaction 2,2-dimethylpropanal + hydrogen cyanide = (2S)-2-hydroxy-3,3-dimethylbutanenitrile. The catalysed reaction is acrolein + hydrogen cyanide = (2S)-2-hydroxybut-3-enenitrile. It carries out the reaction (2E)-but-2-enal + hydrogen cyanide = (2S,3E)-2-hydroxypent-3-enenitrile. The enzyme catalyses (E)-hex-2-enal + hydrogen cyanide = (2S,3E)-2-hydroxyhept-3-enenitrile. It catalyses the reaction cyclohexanecarbaldehyde + hydrogen cyanide = (2S)-2-cyclohexyl-2-hydroxyacetonitrile. The catalysed reaction is benzaldehyde + hydrogen cyanide = (S)-mandelonitrile. It carries out the reaction 4-methoxybenzaldehyde + hydrogen cyanide = (2S)-2-hydroxy-2-(4-methoxyphenyl)acetonitrile. The enzyme catalyses piperonal + hydrogen cyanide = (2S)-2-(2H-1,3-benzodioxol-5-yl)-2-hydroxyacetonitrile. It catalyses the reaction formylthiophene + hydrogen cyanide = (2R)-2-hydroxy-2-(thiophen-2-yl)acetonitrile. The catalysed reaction is 3-formylthiophene + hydrogen cyanide = (2S)-2-hydroxy-2-(thiophen-3-yl)acetonitrile. It carries out the reaction furan-3-carbaldehyde + hydrogen cyanide = (2S)-2-(furan-3-yl)-2-hydroxyacetonitrile. Functionally, involved in cyanogenesis, the release of HCN from cyanogenic glycosides in injured tissues; the release of toxic HCN is believed to play a central role in the defense mechanism of plants against herbivores and microbial attack. Decomposes a variety of cyanohydrins (alpha-hydroxynitriles) into HCN and the corresponding aldehydes or ketones; two natural substrates are 2-hydroxy-2-methylpropanenitrile (acetone cyanohydrin) and 2-hydroxy-2-methylbutanenitrile (2-butanone cyanohydrin), but in vitro can also act on 2-hydroxy-2-methylpentanenitrile (2-pentanone cyanohydrin) and mandelonitrile. Is also able to catalyze the reverse reaction in vitro, leading to the stereospecific synthesis of aliphatic, aromatic, and heterocyclic cyanohydrins, important intermediates in the production of various agrochemicals or pharmaceuticals. The protein is (S)-hydroxynitrile lyase of Manihot esculenta (Cassava).